The chain runs to 87 residues: Small ribosomal subunit protein uS17 (87 aa).

This sequence belongs to the universal ribosomal protein uS17 family. Part of the 30S ribosomal subunit.

One of the primary rRNA binding proteins, it binds specifically to the 5'-end of 16S ribosomal RNA. The polypeptide is Small ribosomal subunit protein uS17 (Chromobacterium violaceum (strain ATCC 12472 / DSM 30191 / JCM 1249 / CCUG 213 / NBRC 12614 / NCIMB 9131 / NCTC 9757 / MK)).